The following is a 271-amino-acid chain: 5'-AMP-activated protein kinase subunit beta-2 (271 aa).

The tract at residues 1–47 is disordered; it reads MGNTTSERVSGERHGAKAARAEGGGHGPGKEHKIMVGSTDDPSVFSL. At serine 38 the chain carries Phosphoserine; by ULK1. The residue at position 39 (threonine 39) is a Phosphothreonine; by ULK1. At serine 68 the chain carries Phosphoserine; by ULK1. Phosphoserine is present on residues serine 94 and serine 107. At threonine 147 the chain carries Phosphothreonine. A phosphoserine mark is found at serine 157 and serine 169. Residue serine 173 is modified to Phosphoserine; by ULK1. At serine 183 the chain carries Phosphoserine.

It belongs to the 5'-AMP-activated protein kinase beta subunit family. As to quaternary structure, AMPK is a heterotrimer of an alpha catalytic subunit (PRKAA1 or PRKAA2), a beta (PRKAB1 or PRKAB2) and a gamma non-catalytic subunits (PRKAG1, PRKAG2 or PRKAG3). In terms of processing, phosphorylated when associated with the catalytic subunit (PRKAA1 or PRKAA2). Phosphorylated by ULK1 and ULK2; leading to negatively regulate AMPK activity and suggesting the existence of a regulatory feedback loop between ULK1, ULK2 and AMPK.

In terms of biological role, non-catalytic subunit of AMP-activated protein kinase (AMPK), an energy sensor protein kinase that plays a key role in regulating cellular energy metabolism. In response to reduction of intracellular ATP levels, AMPK activates energy-producing pathways and inhibits energy-consuming processes: inhibits protein, carbohydrate and lipid biosynthesis, as well as cell growth and proliferation. AMPK acts via direct phosphorylation of metabolic enzymes, and by longer-term effects via phosphorylation of transcription regulators. Also acts as a regulator of cellular polarity by remodeling the actin cytoskeleton; probably by indirectly activating myosin. Beta non-catalytic subunit acts as a scaffold on which the AMPK complex assembles, via its C-terminus that bridges alpha (PRKAA1 or PRKAA2) and gamma subunits (PRKAG1, PRKAG2 or PRKAG3). This chain is 5'-AMP-activated protein kinase subunit beta-2 (Prkab2), found in Rattus norvegicus (Rat).